We begin with the raw amino-acid sequence, 447 residues long: Methylenetetrahydrofolate--tRNA-(uracil-5-)-methyltransferase TrmFO (447 aa).

10-15 (GAGLAG) contacts FAD.

The protein belongs to the MnmG family. TrmFO subfamily. FAD is required as a cofactor.

It is found in the cytoplasm. It catalyses the reaction uridine(54) in tRNA + (6R)-5,10-methylene-5,6,7,8-tetrahydrofolate + NADH + H(+) = 5-methyluridine(54) in tRNA + (6S)-5,6,7,8-tetrahydrofolate + NAD(+). The enzyme catalyses uridine(54) in tRNA + (6R)-5,10-methylene-5,6,7,8-tetrahydrofolate + NADPH + H(+) = 5-methyluridine(54) in tRNA + (6S)-5,6,7,8-tetrahydrofolate + NADP(+). In terms of biological role, catalyzes the folate-dependent formation of 5-methyl-uridine at position 54 (M-5-U54) in all tRNAs. In Symbiobacterium thermophilum (strain DSM 24528 / JCM 14929 / IAM 14863 / T), this protein is Methylenetetrahydrofolate--tRNA-(uracil-5-)-methyltransferase TrmFO.